The primary structure comprises 46 residues: Large ribosomal subunit protein bL36A (46 aa).

This sequence belongs to the bacterial ribosomal protein bL36 family.

This is Large ribosomal subunit protein bL36A from Sodalis glossinidius (strain morsitans).